A 160-amino-acid chain; its full sequence is Cytochrome b6-f complex subunit 4 (160 aa).

3 helical membrane passes run 36-56 (LLYI…GLAV), 95-115 (LLGV…PFLE), and 131-151 (TVFL…TLPI).

The protein belongs to the cytochrome b family. PetD subfamily. As to quaternary structure, the 4 large subunits of the cytochrome b6-f complex are cytochrome b6, subunit IV (17 kDa polypeptide, petD), cytochrome f and the Rieske protein, while the 4 small subunits are petG, petL, petM and petN. The complex functions as a dimer.

It is found in the plastid. The protein localises to the chloroplast thylakoid membrane. In terms of biological role, component of the cytochrome b6-f complex, which mediates electron transfer between photosystem II (PSII) and photosystem I (PSI), cyclic electron flow around PSI, and state transitions. This is Cytochrome b6-f complex subunit 4 from Coffea arabica (Arabian coffee).